Consider the following 938-residue polypeptide: Protein zds1 (938 aa).

The segment covering 1 to 13 has biased composition (polar residues); it reads MSSSSVSNTLSIE. Disordered regions lie at residues 1–140, 326–386, and 424–807; these read MSSS…LDKE, HRGK…VENQ, and SENK…EPKT. Over residues 40–54 the composition is skewed to low complexity; that stretch reads LSGSSSEPLENNSSL. Over residues 57–67 the composition is skewed to basic and acidic residues; that stretch reads STDDPSVEIRS. Residues 77–86 are compositionally biased toward polar residues; the sequence is NLLSDQNITI. Low complexity predominate over residues 116-126; that stretch reads SDAQSSVPSFS. Basic and acidic residues predominate over residues 127–140; sequence EIHDGMSEEELDKE. Composition is skewed to polar residues over residues 330 to 349 and 370 to 380; these read TSTL…TDTS and TSALSNSQNPS. The segment covering 429–440 has biased composition (low complexity); it reads ESAVASESSLSE. Composition is skewed to basic and acidic residues over residues 467–485 and 512–556; these read NKAE…DKSE and NKAE…KADD. A compositionally biased stretch (polar residues) spans 558–567; that stretch reads LPSNNKTEGY. A compositionally biased stretch (pro residues) spans 587-596; that stretch reads VIPPRVPTPV. Over residues 622-635 the composition is skewed to basic and acidic residues; that stretch reads SSKKPEIFHERHIP. Polar residues predominate over residues 642-669; sequence NKPSKNNILKSTQVPVTPKQKSSTANKG. Residues 702–711 show a composition bias toward basic residues; the sequence is KEHKKDKQKK. The segment covering 715 to 725 has biased composition (low complexity); the sequence is QISSSSKSASS. The segment covering 798–807 has biased composition (basic and acidic residues); sequence SDEKSTEPKT.

Its subcellular location is the cytoplasm. In terms of biological role, has a role in establishing cell polarity. Also required for maintenance of cell wall integrity, sexual differentiation, calcium tolerance and cell morphology. Involved in Ras-MAPK signaling pathway at cell cortex. Has a role in meiosis. In Schizosaccharomyces pombe (strain 972 / ATCC 24843) (Fission yeast), this protein is Protein zds1 (zds1).